The primary structure comprises 115 residues: Rubredoxin (115 aa).

The Rubredoxin-like domain maps to 15–66 (SPNHECRACGYVYIPSQGDQKTSVSPGTPFEALPLNWKCPVCGAPRNYFIST). Residues cysteine 20, cysteine 23, cysteine 53, and cysteine 56 each coordinate Fe cation.

This sequence belongs to the rubredoxin family. The cofactor is Fe(3+).

Rubredoxin is a small nonheme, iron protein lacking acid-labile sulfide. Its single Fe, chelated to 4 Cys, functions as an electron acceptor and may also stabilize the conformation of the molecule. Could be involved in hydrogenase-linked redox processes. This Synechocystis sp. (strain ATCC 27184 / PCC 6803 / Kazusa) protein is Rubredoxin (rub).